The following is a 263-amino-acid chain: Tryptophan synthase alpha chain (263 aa).

Catalysis depends on proton acceptor residues glutamate 49 and aspartate 60.

This sequence belongs to the TrpA family. Tetramer of two alpha and two beta chains.

The enzyme catalyses (1S,2R)-1-C-(indol-3-yl)glycerol 3-phosphate + L-serine = D-glyceraldehyde 3-phosphate + L-tryptophan + H2O. Its pathway is amino-acid biosynthesis; L-tryptophan biosynthesis; L-tryptophan from chorismate: step 5/5. In terms of biological role, the alpha subunit is responsible for the aldol cleavage of indoleglycerol phosphate to indole and glyceraldehyde 3-phosphate. This is Tryptophan synthase alpha chain from Clostridium kluyveri (strain NBRC 12016).